Reading from the N-terminus, the 211-residue chain is tRNA (guanine-N(7)-)-methyltransferase (211 aa).

S-adenosyl-L-methionine-binding residues include Glu-43, Glu-68, Asp-95, and Asp-117. Asp-117 is a catalytic residue. Substrate is bound by residues Lys-121, Asp-153, and 190–193 (TEYE).

The protein belongs to the class I-like SAM-binding methyltransferase superfamily. TrmB family.

It carries out the reaction guanosine(46) in tRNA + S-adenosyl-L-methionine = N(7)-methylguanosine(46) in tRNA + S-adenosyl-L-homocysteine. The protein operates within tRNA modification; N(7)-methylguanine-tRNA biosynthesis. In terms of biological role, catalyzes the formation of N(7)-methylguanine at position 46 (m7G46) in tRNA. The chain is tRNA (guanine-N(7)-)-methyltransferase from Staphylococcus saprophyticus subsp. saprophyticus (strain ATCC 15305 / DSM 20229 / NCIMB 8711 / NCTC 7292 / S-41).